The chain runs to 167 residues: Epithelial membrane protein 2 (167 aa).

The helical transmembrane segment at 1–21 (MLVLLAFIIAFHITSAALLFI) threads the bilayer. N-linked (GlcNAc...) asparagine glycosylation is found at Asn-44, Asn-47, and Asn-52. 3 consecutive transmembrane segments (helical) span residues 67 to 87 (TMIL…LQLF), 95 to 115 (FVLT…AASI), and 143 to 163 (YILA…YLIL).

It belongs to the PMP-22/EMP/MP20 family. As to quaternary structure, interacts with PTK2; regulates PTK2 activation and localization. Interacts with ITGB3; regulates the levels of the heterodimer ITGA5-ITGB3 integrin surface expression. Interacts with P2RX7 (via C-terminus). Interacts with ITGB1; the interaction may be direct or indirect and ITGB1 has a heterodimer form. As to expression, expressed in ciliary body epithelia, sclera, cornea, and retinal pigment epithelium (at protein level). Expressed in lung and endometrial tissue; expression is particularly abundant in secretory endometrium (at protein level). Expressed in placental villous syncytiotrophoblasts and cytotrophoblasts and on the membrane of interstitial trophoblasts (at protein level).

The protein localises to the golgi apparatus membrane. It is found in the cell membrane. The protein resides in the apical cell membrane. Its subcellular location is the membrane raft. It localises to the cytoplasm. The protein localises to the nucleus. It is found in the perinuclear region. Functions as a key regulator of cell membrane composition by regulating protein surface expression. Also, plays a role in regulation of processes including cell migration, cell proliferation, cell contraction and cell adhesion. Regulates transepithelial migration of neutrophils into the alveolar lumen, potentially via mediation of cell surface expression of adhesion markers and lipid raft formation. Negatively regulates caveolae formation by reducing CAV1 expression and CAV1 amount by increasing lysosomal degradation. Facilitates surface trafficking and formation of lipid rafts bearing GPI-anchor proteins. Regulates surface expression of MHC1 and ICAM1 proteins increasing susceptibility to T-cell mediated cytotoxicity. Regulates the plasma membrane expression of the integrin heterodimers ITGA6-ITGB1, ITGA5-ITGB3 and ITGA5-ITGB1 resulting in modulation of cell-matrix adhesion. Also regulates many processes through PTK2. Regulates blood vessel endothelial cell migration and angiogenesis by regulating VEGF protein expression through PTK2 activation. Regulates cell migration and cell contraction through PTK2 and SRC activation. Regulates focal adhesion density, F-actin conformation and cell adhesion capacity through interaction with PTK2. Positively regulates cell proliferation. Plays a role during cell death and cell blebbing. Promotes angiogenesis and vasculogenesis through induction of VEGFA via a HIF1A-dependent pathway. Also plays a role in embryo implantation by regulating surface trafficking of integrin heterodimer ITGA5-ITGB3. Plays a role in placental angiogenesis and uterine natural killer cell regulation at the maternal-fetal placental interface, however not required in the maternal tissues for a viable pregnancy. Involved in the early stages of embryogenic development and cardiogenesis, potentially via regulation of epithelial-mesenchymal transition timing. May play a role in glomerular filtration. The polypeptide is Epithelial membrane protein 2 (EMP2) (Homo sapiens (Human)).